The sequence spans 365 residues: MINLRGVKMFDKLEEVVARYDELNKMLVSPEVLADSKKMIECNKAINEITEIVEKYKEYKKYVDDIEFIKESFKTEKDSDMKEMLNEELKEAEEKLPKLEEELKILLLPKDKNDDKNVIVEIRGGAGGDEAALFAADLFRMYSRYAERKKWKIEIIEKQDGELNGLKEIAFTIIGLGAYSRLKFESGVHRVQRVPKTEASGRIHTSTATVAVLPEVEDIQEVTVDPKDLKIDTYRSGGAGGQHVNMTDSAVRITHLPTGIVVQCQDERSQLKNREKAMKHLLTKLYEMEQEKQRSEVESERRLQVGTGDRAEKIRTYNFPDGRITDHRIKLTVHQLEAFLDGDIDEMIDALITFHQAELLSASEQ.

Glutamine 242 carries the N5-methylglutamine modification.

This sequence belongs to the prokaryotic/mitochondrial release factor family. Methylated by PrmC. Methylation increases the termination efficiency of RF1.

It is found in the cytoplasm. Functionally, peptide chain release factor 1 directs the termination of translation in response to the peptide chain termination codons UAG and UAA. The protein is Peptide chain release factor 1 of Fusobacterium nucleatum subsp. nucleatum (strain ATCC 25586 / DSM 15643 / BCRC 10681 / CIP 101130 / JCM 8532 / KCTC 2640 / LMG 13131 / VPI 4355).